A 532-amino-acid polypeptide reads, in one-letter code: MTSTVAHGAGSAGPADDVEPMSARTYQVRTYGCQMNVHDSERMAGLLEAAGYRRAAEGTDADVVVFNTCAVRENADNKLYGNLSHLAPRKRTSPDMQIAVGGCLAQKDRDALLRKAPWVDVVFGTHNIGSLPALLDRARHNRVAQVEIAEALQQFPSSLPSARESAYAAWVSISVGCNNTCTFCIVPSLRGKEIDRSPADILAEVQSLVDTGVVEITLLGQNVNAYGVSFADPALPRNRGAFAELLRACGDIDGLERVRFTSPHPAEFTDDVIEAMAQTPNVCPALHMPLQSGSDRVLRAMRRSYRAERYLGIIERVRAAMPHAAITTDLIVGFPGETEQDFAATLDVVRQARFSAAFTFQYSKRPGTPAAELDGQLPKAVVQERYERLVELQEQISLEGNRAIVGQRVELLVATGEGRKDTLTARMSGRARDGRLVHFRAGDGPVRPGDIVTVEVTDAAPHHLIADGGILAHRRTRAGDAHADGQTVRGIGLGMPGIGRPVVPVAAEATSCGSAGGCGSADGAGSSAGDPQ.

The segment at 1–21 is disordered; the sequence is MTSTVAHGAGSAGPADDVEPM. Residues 24-140 enclose the MTTase N-terminal domain; sequence RTYQVRTYGC…LPALLDRARH (117 aa). [4Fe-4S] cluster-binding residues include Cys-33, Cys-69, Cys-103, Cys-177, Cys-181, and Cys-184. Positions 163–399 constitute a Radical SAM core domain; that stretch reads RESAYAAWVS…VELQEQISLE (237 aa). Residues 402–470 form the TRAM domain; it reads RAIVGQRVEL…PHHLIADGGI (69 aa). Positions 510-532 are disordered; that stretch reads TSCGSAGGCGSADGAGSSAGDPQ. The span at 523–532 shows a compositional bias: low complexity; the sequence is GAGSSAGDPQ.

It belongs to the methylthiotransferase family. MiaB subfamily. In terms of assembly, monomer. The cofactor is [4Fe-4S] cluster.

It is found in the cytoplasm. The catalysed reaction is N(6)-dimethylallyladenosine(37) in tRNA + (sulfur carrier)-SH + AH2 + 2 S-adenosyl-L-methionine = 2-methylsulfanyl-N(6)-dimethylallyladenosine(37) in tRNA + (sulfur carrier)-H + 5'-deoxyadenosine + L-methionine + A + S-adenosyl-L-homocysteine + 2 H(+). Its function is as follows. Catalyzes the methylthiolation of N6-(dimethylallyl)adenosine (i(6)A), leading to the formation of 2-methylthio-N6-(dimethylallyl)adenosine (ms(2)i(6)A) at position 37 in tRNAs that read codons beginning with uridine. In Mycobacterium ulcerans (strain Agy99), this protein is tRNA-2-methylthio-N(6)-dimethylallyladenosine synthase.